The primary structure comprises 354 residues: Uroporphyrinogen decarboxylase (354 aa).

Residues 27–31, phenylalanine 46, aspartate 77, tyrosine 154, threonine 209, and histidine 327 contribute to the substrate site; that span reads RRAGR.

The protein belongs to the uroporphyrinogen decarboxylase family. As to quaternary structure, homodimer.

The protein localises to the cytoplasm. It carries out the reaction uroporphyrinogen III + 4 H(+) = coproporphyrinogen III + 4 CO2. Its pathway is porphyrin-containing compound metabolism; protoporphyrin-IX biosynthesis; coproporphyrinogen-III from 5-aminolevulinate: step 4/4. In terms of biological role, catalyzes the decarboxylation of four acetate groups of uroporphyrinogen-III to yield coproporphyrinogen-III. The protein is Uroporphyrinogen decarboxylase of Salmonella typhimurium (strain LT2 / SGSC1412 / ATCC 700720).